The primary structure comprises 83 residues: Mu-theraphotoxin-Hhn2j 1 (83 aa).

The signal sequence occupies residues 1–21 (MKASMFLALAGLVLLFVVGYA). Residues 22-48 (SESEEKEFPIELLSKIFAVDVFKGEER) constitute a propeptide that is removed on maturation. 3 disulfide bridges follow: C50-C65, C57-C70, and C64-C77. The residue at position 81 (L81) is a Leucine amide.

It belongs to the neurotoxin 10 (Hwtx-1) family. 15 (Hntx-3) subfamily. In terms of assembly, monomer. As to expression, expressed by the venom gland.

It localises to the secreted. In terms of biological role, lethal neurotoxin. Selectively blocks tetrodotoxin-sensitive voltage-gated sodium channels (Nav). Does not affect tetrodotoxin-resistant voltage-gated sodium channels or calcium channels. The chain is Mu-theraphotoxin-Hhn2j 1 from Cyriopagopus hainanus (Chinese bird spider).